The sequence spans 290 residues: MSFMDQIPGGGNYPKLPVECLPNFPIQPSLTFRGRNDSHKLKNFISEIMLNMSMISWPNDASRIVYCRRHLLNPAAQWANDFVQEQGILEITFDTFIQGLYQHFYKPPDINKIFNAITQLSEAKLGIERLNQRFRKIWDRMPPDFMTEKAAIMTYTRLLTKETYNIVRMHKPETLKDAMEEAYQTTALTERFFPGFELDADGDTIIGATTHLQEEYDSDYDSEDNLTQNRYVHTVRTRRSYNKPMSNHRNRRNNNASREECIKNRLCFYCKKEGHRLNECRARKASSNRS.

N-acetylserine is present on Ser-2. The CCHC-type zinc-finger motif lies at 265–282 (RLCFYCKKEGHRLNECRA).

It localises to the cytoplasm. Capsid protein (CA) is the structural component of the virus-like particle (VLP), forming the shell that encapsulates the retrotransposons dimeric RNA genome. Its function is as follows. Nucleocapsid protein p9 (NC) forms the nucleocore that coats the retro-elements dimeric RNA. Binds these RNAs through its zinc fingers. Promotes primer tRNA(i)-Met annealing to the multipartite primer-binding site (PBS), dimerization of Ty3 RNA and initiation of reverse transcription. In Saccharomyces cerevisiae (strain ATCC 204508 / S288c) (Baker's yeast), this protein is Transposon Ty3-I Gag polyprotein (TY3A-I).